A 138-amino-acid polypeptide reads, in one-letter code: Putative pre-16S rRNA nuclease (138 aa).

The protein belongs to the YqgF nuclease family.

The protein localises to the cytoplasm. In terms of biological role, could be a nuclease involved in processing of the 5'-end of pre-16S rRNA. The sequence is that of Putative pre-16S rRNA nuclease from Carboxydothermus hydrogenoformans (strain ATCC BAA-161 / DSM 6008 / Z-2901).